Here is a 425-residue protein sequence, read N- to C-terminus: Exodeoxyribonuclease 7 large subunit (425 aa).

The protein belongs to the XseA family. Heterooligomer composed of large and small subunits.

The protein localises to the cytoplasm. It carries out the reaction Exonucleolytic cleavage in either 5'- to 3'- or 3'- to 5'-direction to yield nucleoside 5'-phosphates.. In terms of biological role, bidirectionally degrades single-stranded DNA into large acid-insoluble oligonucleotides, which are then degraded further into small acid-soluble oligonucleotides. The chain is Exodeoxyribonuclease 7 large subunit from Nocardia farcinica (strain IFM 10152).